Reading from the N-terminus, the 367-residue chain is Dual specificity protein phosphatase 1 (367 aa).

A Rhodanese domain is found at 20-137; it reads RAAQCLLLDC…FSASCPELCS (118 aa). The 142-residue stretch at 173–314 folds into the Tyrosine-protein phosphatase domain; it reads GPVEILPFLY…LLQFESQVLA (142 aa). Cys-258 functions as the Phosphocysteine intermediate in the catalytic mechanism. Phosphoserine; by MAPK1 and MAPK3 is present on residues Ser-359 and Ser-364.

The protein belongs to the protein-tyrosine phosphatase family. Non-receptor class dual specificity subfamily. In terms of processing, phosphorylation at Ser-359 and Ser-364 by MAPK1/ERK2 and MAPK3/ERK1 reduces its rate of degradation. 'Lys-48'-linked polyubiquitinated by NEURL3, leading to proteasomal degradation. As to expression, expressed at high levels in the lung, liver placenta and pancreas. Moderate levels seen in the heart and skeletal muscle. Lower levels found in the brain and kidney.

The protein resides in the nucleus. The catalysed reaction is O-phospho-L-tyrosyl-[protein] + H2O = L-tyrosyl-[protein] + phosphate. It carries out the reaction O-phospho-L-seryl-[protein] + H2O = L-seryl-[protein] + phosphate. It catalyses the reaction O-phospho-L-threonyl-[protein] + H2O = L-threonyl-[protein] + phosphate. Dual specificity phosphatase that dephosphorylates MAP kinase MAPK1/ERK2 on both 'Thr-183' and 'Tyr-185', regulating its activity during the meiotic cell cycle. The chain is Dual specificity protein phosphatase 1 from Homo sapiens (Human).